We begin with the raw amino-acid sequence, 354 residues long: Probable L-ascorbate-6-phosphate lactonase UlaG (354 aa).

The protein belongs to the UlaG family. A divalent metal cation is required as a cofactor.

The protein resides in the cytoplasm. The catalysed reaction is L-ascorbate 6-phosphate + H2O = 3-dehydro-L-gulonate 6-phosphate. Its pathway is cofactor degradation; L-ascorbate degradation; D-xylulose 5-phosphate from L-ascorbate: step 1/4. Its function is as follows. Probably catalyzes the hydrolysis of L-ascorbate-6-P into 3-keto-L-gulonate-6-P. Is essential for L-ascorbate utilization under anaerobic conditions. The sequence is that of Probable L-ascorbate-6-phosphate lactonase UlaG from Escherichia coli O127:H6 (strain E2348/69 / EPEC).